A 1413-amino-acid chain; its full sequence is DNA-directed RNA polymerase subunit beta' (1413 aa).

Residues Cys-70, Cys-72, Cys-85, and Cys-88 each coordinate Zn(2+). Mg(2+) is bound by residues Asp-460, Asp-462, and Asp-464. Residues Cys-819, Cys-893, Cys-900, and Cys-903 each contribute to the Zn(2+) site. The tract at residues 1392-1413 (EEAFDFGTPSAPAEEPQHPAAE) is disordered.

The protein belongs to the RNA polymerase beta' chain family. In terms of assembly, the RNAP catalytic core consists of 2 alpha, 1 beta, 1 beta' and 1 omega subunit. When a sigma factor is associated with the core the holoenzyme is formed, which can initiate transcription. Mg(2+) serves as cofactor. Zn(2+) is required as a cofactor.

It carries out the reaction RNA(n) + a ribonucleoside 5'-triphosphate = RNA(n+1) + diphosphate. DNA-dependent RNA polymerase catalyzes the transcription of DNA into RNA using the four ribonucleoside triphosphates as substrates. The chain is DNA-directed RNA polymerase subunit beta' from Burkholderia cenocepacia (strain ATCC BAA-245 / DSM 16553 / LMG 16656 / NCTC 13227 / J2315 / CF5610) (Burkholderia cepacia (strain J2315)).